Reading from the N-terminus, the 43-residue chain is Protein PsbN 1 (43 aa).

The chain crosses the membrane as a helical span at residues 3–23; the sequence is TATILGILIAAAVVGITVLAL.

This sequence belongs to the PsbN family.

The protein resides in the cellular thylakoid membrane. Functionally, may play a role in photosystem I and II biogenesis. The protein is Protein PsbN 1 of Microcystis aeruginosa (strain NIES-843 / IAM M-2473).